Reading from the N-terminus, the 102-residue chain is MTMKRLLLVSTLAGASALATLPANAFWGWNPFGWGGGPWDGPWGGGPWGSPWYGGYPYHGGYYPYGLYGVPYGWGAPVYGYPGYVYPGYAYPAPTQPSTKSQ.

A signal peptide spans 1–25 (MTMKRLLLVSTLAGASALATLPANA).

In terms of assembly, the protein envelope of the sulfur globules is composed of the three different proteins CV1, CV2 and CV3.

In terms of biological role, structural protein of the sulfur globules, which are intracellular globules that serve for sulfur storage in purple sulfur bacteria. In Allochromatium vinosum (strain ATCC 17899 / DSM 180 / NBRC 103801 / NCIMB 10441 / D) (Chromatium vinosum), this protein is Sulfur globule protein CV3 (sgpC).